We begin with the raw amino-acid sequence, 274 residues long: tRNA-cytidine(32) 2-sulfurtransferase (274 aa).

The short motif at 40 to 45 is the PP-loop motif element; it reads SGGKDS. Residues Cys115, Cys118, and Cys206 each coordinate [4Fe-4S] cluster.

This sequence belongs to the TtcA family. As to quaternary structure, homodimer. Requires Mg(2+) as cofactor. It depends on [4Fe-4S] cluster as a cofactor.

Its subcellular location is the cytoplasm. It carries out the reaction cytidine(32) in tRNA + S-sulfanyl-L-cysteinyl-[cysteine desulfurase] + AH2 + ATP = 2-thiocytidine(32) in tRNA + L-cysteinyl-[cysteine desulfurase] + A + AMP + diphosphate + H(+). Its pathway is tRNA modification. In terms of biological role, catalyzes the ATP-dependent 2-thiolation of cytidine in position 32 of tRNA, to form 2-thiocytidine (s(2)C32). The sulfur atoms are provided by the cysteine/cysteine desulfurase (IscS) system. The polypeptide is tRNA-cytidine(32) 2-sulfurtransferase (Azotobacter vinelandii (strain DJ / ATCC BAA-1303)).